The primary structure comprises 140 residues: Putative transmembrane protein 49 (140 aa).

2 helical membrane passes run 23–43 and 93–110; these read LIMS…IGGV and IAVH…RYMY.

The protein localises to the host membrane. The chain is Putative transmembrane protein 49 (SIFV0049) from Saccharolobus islandicus (Sulfolobus islandicus).